We begin with the raw amino-acid sequence, 146 residues long: Hemoglobin subunit delta (146 aa).

In terms of domain architecture, Globin spans 2-146; the sequence is HLTGEEKSAV…VATALAHKYH (145 aa). The heme b site is built by H63 and H92.

It belongs to the globin family. As to quaternary structure, heterotetramer of two delta chains and two alpha chains. In terms of tissue distribution, red blood cells.

The polypeptide is Hemoglobin subunit delta (HBD) (Ateles fusciceps (Brown-headed spider monkey)).